The following is a 493-amino-acid chain: Cytochrome c-552 (493 aa).

An N-terminal signal peptide occupies residues 1 to 25 (MEKKLKSWQGWLLFCGAMAVVFVLG). Histidine 116 contributes to the heme c binding site. Cysteine 144, cysteine 147, and lysine 148 together coordinate heme. Heme c contacts are provided by cysteine 182, cysteine 185, histidine 186, cysteine 224, cysteine 227, and histidine 228. Ca(2+)-binding residues include glutamate 230, tyrosine 231, lysine 276, and glutamine 278. Tyrosine 231 is a substrate binding site. Histidine 279 contacts substrate. Heme c-binding residues include histidine 290, cysteine 297, cysteine 300, histidine 301, histidine 315, cysteine 328, cysteine 331, histidine 332, and histidine 407.

Belongs to the cytochrome c-552 family. It depends on Ca(2+) as a cofactor. Heme c serves as cofactor.

It is found in the periplasm. The catalysed reaction is 6 Fe(III)-[cytochrome c] + NH4(+) + 2 H2O = 6 Fe(II)-[cytochrome c] + nitrite + 8 H(+). Its pathway is nitrogen metabolism; nitrate reduction (assimilation). Functionally, catalyzes the reduction of nitrite to ammonia, consuming six electrons in the process. The sequence is that of Cytochrome c-552 from Bacteroides fragilis (strain ATCC 25285 / DSM 2151 / CCUG 4856 / JCM 11019 / LMG 10263 / NCTC 9343 / Onslow / VPI 2553 / EN-2).